The following is a 310-amino-acid chain: Leucine carboxyl methyltransferase 1 (310 aa).

S-adenosyl-L-methionine is bound by residues arginine 50, glycine 75, aspartate 100, 145-146 (DI), and glutamate 169.

This sequence belongs to the methyltransferase superfamily. LCMT family.

The catalysed reaction is [phosphatase 2A protein]-C-terminal L-leucine + S-adenosyl-L-methionine = [phosphatase 2A protein]-C-terminal L-leucine methyl ester + S-adenosyl-L-homocysteine. Functionally, methylates the carboxyl group of the C-terminal leucine residue of protein phosphatase 2A catalytic subunits to form alpha-leucine ester residues. The protein is Leucine carboxyl methyltransferase 1 (ppm1) of Schizosaccharomyces pombe (strain 972 / ATCC 24843) (Fission yeast).